The sequence spans 340 residues: MKRIAVLTSGGDAPGMNAAIRAVVRKAISEGIEVYGINHGYAGMVAGDIFPLTSASVGDKIGRGGTFLYSARYPEFAQVEGQLAGIEQLKKFGIEGVVVIGGDGSYHGAMRLTEHGFPAVGLPGTIDNDIVGTDFTIGFDTAVSTVVDALDKIRDTSSSHNRTFVVEVMGRNAGDIALNAGIAAGADDICIPEKEFKFENVVNNINKGYEKGKNHHIIVLAEGVMTGEEFATKLKEAGYKGDLRVSVLGHIQRGGSPTARDRVLASRMGARAVELLRDGIGGVAVGIRNEELVESPILGTAEEGALFSLTTEGGIKVNNPHKAGLELYRLNSALNNLNLN.

G11 contacts ATP. R21–R25 is an ADP binding site. Residues R72–Y73 and G102–S105 each bind ATP. D103 provides a ligand contact to Mg(2+). Substrate is bound at residue T125–D127. D127 serves as the catalytic Proton acceptor. Residue R154 participates in ADP binding. Residues R162 and M169–R171 contribute to the substrate site. ADP contacts are provided by residues G185–D187, K211, and K213–H215. Substrate contacts are provided by residues E222, R244, and H250–R253.

This sequence belongs to the phosphofructokinase type A (PFKA) family. ATP-dependent PFK group I subfamily. Prokaryotic clade 'B1' sub-subfamily. As to quaternary structure, homotetramer. The cofactor is Mg(2+).

Its subcellular location is the cytoplasm. The enzyme catalyses beta-D-fructose 6-phosphate + ATP = beta-D-fructose 1,6-bisphosphate + ADP + H(+). It functions in the pathway carbohydrate degradation; glycolysis; D-glyceraldehyde 3-phosphate and glycerone phosphate from D-glucose: step 3/4. Its activity is regulated as follows. Allosterically activated by ADP and other diphosphonucleosides, and allosterically inhibited by phosphoenolpyruvate. Functionally, catalyzes the phosphorylation of D-fructose 6-phosphate to fructose 1,6-bisphosphate by ATP, the first committing step of glycolysis. This chain is ATP-dependent 6-phosphofructokinase, found in Lactococcus lactis subsp. lactis (Streptococcus lactis).